A 137-amino-acid chain; its full sequence is Large ribosomal subunit protein uL16 (137 aa).

The protein belongs to the universal ribosomal protein uL16 family. As to quaternary structure, part of the 50S ribosomal subunit.

In terms of biological role, binds 23S rRNA and is also seen to make contacts with the A and possibly P site tRNAs. The chain is Large ribosomal subunit protein uL16 from Bartonella quintana (strain Toulouse) (Rochalimaea quintana).